Reading from the N-terminus, the 741-residue chain is Isocitrate dehydrogenase [NADP] (741 aa).

NADP(+) contacts are provided by asparagine 85 and serine 87. D-threo-isocitrate contacts are provided by serine 132, asparagine 135, arginine 139, arginine 145, and lysine 255. Asparagine 135 contacts NADP(+). A Mn(2+)-binding site is contributed by aspartate 350. The D-threo-isocitrate site is built by tyrosine 420 and arginine 547. Aspartate 548 provides a ligand contact to Mn(2+). NADP(+) is bound by residues serine 585, histidine 589, arginine 600, aspartate 602, and arginine 649.

It belongs to the monomeric-type IDH family. In terms of assembly, monomer. Mg(2+) serves as cofactor. Requires Mn(2+) as cofactor.

It localises to the cytoplasm. The enzyme catalyses D-threo-isocitrate + NADP(+) = 2-oxoglutarate + CO2 + NADPH. Activity is inhibited in the presence of Ca(2+). Its function is as follows. Catalyzes the oxidative decarboxylation of isocitrate to 2-oxoglutarate and carbon dioxide with the concomitant reduction of NADP(+). The protein is Isocitrate dehydrogenase [NADP] of Azotobacter vinelandii.